A 509-amino-acid polypeptide reads, in one-letter code: ATP synthase subunit alpha (509 aa).

169 to 176 serves as a coordination point for ATP; it reads GDRQTGKT.

It belongs to the ATPase alpha/beta chains family. F-type ATPases have 2 components, CF(1) - the catalytic core - and CF(0) - the membrane proton channel. CF(1) has five subunits: alpha(3), beta(3), gamma(1), delta(1), epsilon(1). CF(0) has three main subunits: a(1), b(2) and c(9-12). The alpha and beta chains form an alternating ring which encloses part of the gamma chain. CF(1) is attached to CF(0) by a central stalk formed by the gamma and epsilon chains, while a peripheral stalk is formed by the delta and b chains.

Its subcellular location is the cell inner membrane. The catalysed reaction is ATP + H2O + 4 H(+)(in) = ADP + phosphate + 5 H(+)(out). Its function is as follows. Produces ATP from ADP in the presence of a proton gradient across the membrane. The alpha chain is a regulatory subunit. In Sinorhizobium medicae (strain WSM419) (Ensifer medicae), this protein is ATP synthase subunit alpha.